Consider the following 86-residue polypeptide: Putative membrane protein insertion efficiency factor (86 aa).

Belongs to the UPF0161 family.

It localises to the cell inner membrane. Functionally, could be involved in insertion of integral membrane proteins into the membrane. The polypeptide is Putative membrane protein insertion efficiency factor (Mannheimia succiniciproducens (strain KCTC 0769BP / MBEL55E)).